Consider the following 502-residue polypeptide: Lysine--tRNA ligase (502 aa).

Glutamate 413 and glutamate 420 together coordinate Mg(2+).

Belongs to the class-II aminoacyl-tRNA synthetase family. In terms of assembly, homodimer. The cofactor is Mg(2+).

The protein localises to the cytoplasm. The enzyme catalyses tRNA(Lys) + L-lysine + ATP = L-lysyl-tRNA(Lys) + AMP + diphosphate. This is Lysine--tRNA ligase from Haemophilus influenzae (strain PittEE).